The following is a 301-amino-acid chain: Tetratricopeptide repeat domain-containing protein PYG7, chloroplastic (301 aa).

Residues 1–61 (MFESNMVLQT…FHDYVFAEIS (61 aa)) constitute a chloroplast transit peptide. Helical transmembrane passes span 82–102 (TFLL…AAAA) and 121–141 (IQLS…FYVI). TPR repeat units lie at residues 168–201 (ATEL…WDGD), 206–239 (AQVY…QPGY), and 240–273 (VTAW…DPNN).

Interacts with PSA3.

The protein localises to the plastid. It is found in the chloroplast thylakoid membrane. Nuclear genome-encoded factor required for the accumulation of photosystem I (PSI). Functions as a PSI biogenesis factor. Cooperates with PSA3 to promote the stable assembly of PSI in the thylakoid membrane. May target primarily the PsaC subunit. The protein is Tetratricopeptide repeat domain-containing protein PYG7, chloroplastic of Arabidopsis thaliana (Mouse-ear cress).